Here is a 144-residue protein sequence, read N- to C-terminus: Maximins 3/H2 (144 aa).

An N-terminal signal peptide occupies residues 1 to 18; that stretch reads MNFKYIVAVSFLIASAYA. 2 consecutive propeptides follow at residues 19–43 and 74–123; these read RSVQ…REIR and TAEE…KEKR. An Isoleucine amide modification is found at Ile-143.

It belongs to the bombinin family. Expressed by the skin glands.

The protein resides in the secreted. Maximin-3 shows antibacterial activity against both Gram-positive and Gram-negative bacteria. It also shows antimicrobial activity against the fungus C.albicans, but not against A.flavus nor P.uticale. It has little hemolytic activity. It possess a significant cytotoxicity against tumor cell lines. It possess a significant anti-HIV activity. It shows high spermicidal activity. Its function is as follows. Maximin-H2 shows antibacterial activity against both Gram-positive and Gram-negative bacteria. It also shows antimicrobial activity against the fungus C.albicans. Shows strong hemolytic activity. The sequence is that of Maximins 3/H2 from Bombina maxima (Giant fire-bellied toad).